The following is a 100-amino-acid chain: Urease subunit gamma (100 aa).

This sequence belongs to the urease gamma subunit family. Heterotrimer of UreA (gamma), UreB (beta) and UreC (alpha) subunits. Three heterotrimers associate to form the active enzyme.

The protein localises to the cytoplasm. The catalysed reaction is urea + 2 H2O + H(+) = hydrogencarbonate + 2 NH4(+). It participates in nitrogen metabolism; urea degradation; CO(2) and NH(3) from urea (urease route): step 1/1. This is Urease subunit gamma from Frankia alni (strain DSM 45986 / CECT 9034 / ACN14a).